The primary structure comprises 267 residues: Expansin-B10 (267 aa).

The first 22 residues, 1–22, serve as a signal peptide directing secretion; the sequence is MASSCLLLACVVAAAMVSAVSC. A glycan (N-linked (GlcNAc...) asparagine) is linked at Asn32. Positions 61–167 constitute an Expansin-like EG45 domain; it reads GGACGYKDID…RRVRCKYPGE (107 aa). 3 disulfide bridges follow: Cys64–Cys92, Cys95–Cys162, and Cys100–Cys106. The Expansin-like CBD domain occupies 181 to 262; it reads NYFAVLVKYV…NWKANALYKS (82 aa). A glycan (N-linked (GlcNAc...) asparagine) is linked at Asn213.

The protein belongs to the expansin family. Expansin B subfamily.

The protein localises to the secreted. It is found in the cell wall. The protein resides in the membrane. In terms of biological role, may cause loosening and extension of plant cell walls by disrupting non-covalent bonding between cellulose microfibrils and matrix glucans. No enzymatic activity has been found. May be required for rapid internodal elongation in deepwater rice during submergence. This Oryza sativa subsp. japonica (Rice) protein is Expansin-B10 (EXPB10).